The primary structure comprises 855 residues: DNA mismatch repair protein MutS (855 aa).

613-620 (GPNMGGKS) lines the ATP pocket. Residues 796–816 (TTSLPHEMPSQQSGKPASPMQ) form a disordered region.

This sequence belongs to the DNA mismatch repair MutS family.

Functionally, this protein is involved in the repair of mismatches in DNA. It is possible that it carries out the mismatch recognition step. This protein has a weak ATPase activity. The sequence is that of DNA mismatch repair protein MutS from Pseudomonas aeruginosa (strain ATCC 15692 / DSM 22644 / CIP 104116 / JCM 14847 / LMG 12228 / 1C / PRS 101 / PAO1).